The sequence spans 316 residues: tRNA dimethylallyltransferase (316 aa).

Glycine 23–serine 30 provides a ligand contact to ATP. Threonine 25–serine 30 contributes to the substrate binding site. The interval aspartate 48–glutamine 51 is interaction with substrate tRNA.

This sequence belongs to the IPP transferase family. Monomer. Mg(2+) is required as a cofactor.

The catalysed reaction is adenosine(37) in tRNA + dimethylallyl diphosphate = N(6)-dimethylallyladenosine(37) in tRNA + diphosphate. In terms of biological role, catalyzes the transfer of a dimethylallyl group onto the adenine at position 37 in tRNAs that read codons beginning with uridine, leading to the formation of N6-(dimethylallyl)adenosine (i(6)A). The protein is tRNA dimethylallyltransferase of Rhodopseudomonas palustris (strain BisB18).